The chain runs to 426 residues: Serine--tRNA ligase (426 aa).

233–235 (TAE) lines the L-serine pocket. 264 to 266 (RSE) serves as a coordination point for ATP. An L-serine-binding site is contributed by glutamate 287. Position 351–354 (351–354 (EISS)) interacts with ATP. Residue serine 387 coordinates L-serine.

Belongs to the class-II aminoacyl-tRNA synthetase family. Type-1 seryl-tRNA synthetase subfamily. In terms of assembly, homodimer. The tRNA molecule binds across the dimer.

Its subcellular location is the cytoplasm. It carries out the reaction tRNA(Ser) + L-serine + ATP = L-seryl-tRNA(Ser) + AMP + diphosphate + H(+). The catalysed reaction is tRNA(Sec) + L-serine + ATP = L-seryl-tRNA(Sec) + AMP + diphosphate + H(+). The protein operates within aminoacyl-tRNA biosynthesis; selenocysteinyl-tRNA(Sec) biosynthesis; L-seryl-tRNA(Sec) from L-serine and tRNA(Sec): step 1/1. In terms of biological role, catalyzes the attachment of serine to tRNA(Ser). Is also able to aminoacylate tRNA(Sec) with serine, to form the misacylated tRNA L-seryl-tRNA(Sec), which will be further converted into selenocysteinyl-tRNA(Sec). This is Serine--tRNA ligase from Pseudomonas syringae pv. syringae (strain B728a).